A 106-amino-acid polypeptide reads, in one-letter code: Small ribosomal subunit protein uS10 (106 aa).

This sequence belongs to the universal ribosomal protein uS10 family. As to quaternary structure, part of the 30S ribosomal subunit.

Involved in the binding of tRNA to the ribosomes. The sequence is that of Small ribosomal subunit protein uS10 from Synechococcus sp. (strain CC9605).